The primary structure comprises 144 residues: Large ribosomal subunit protein uL15 (144 aa).

The tract at residues 1–57 (MQLNDLRSAPGARREKHRPGRGIGSGLGKTGGRGHKGLTSRSGGKVAPGFEGGQQPL) is disordered. Residues 21–31 (RGIGSGLGKTG) are compositionally biased toward gly residues.

This sequence belongs to the universal ribosomal protein uL15 family. As to quaternary structure, part of the 50S ribosomal subunit.

Functionally, binds to the 23S rRNA. The protein is Large ribosomal subunit protein uL15 of Pseudomonas aeruginosa (strain LESB58).